Here is a 305-residue protein sequence, read N- to C-terminus: Recombination-associated protein RdgC (305 aa).

Belongs to the RdgC family.

It is found in the cytoplasm. The protein resides in the nucleoid. Functionally, may be involved in recombination. This is Recombination-associated protein RdgC from Sodalis glossinidius (strain morsitans).